The chain runs to 621 residues: Chaperone protein HscA homolog (621 aa).

This sequence belongs to the heat shock protein 70 family.

Its function is as follows. Chaperone involved in the maturation of iron-sulfur cluster-containing proteins. Has a low intrinsic ATPase activity which is markedly stimulated by HscB. This is Chaperone protein HscA homolog from Polynucleobacter asymbioticus (strain DSM 18221 / CIP 109841 / QLW-P1DMWA-1) (Polynucleobacter necessarius subsp. asymbioticus).